Here is a 432-residue protein sequence, read N- to C-terminus: Glial fibrillary acidic protein (432 aa).

The head stretch occupies residues 1-72 (MERRRITSAA…KETRASERAE (72 aa)). The residue at position 7 (Thr-7) is a Phosphothreonine; by AURKB and ROCK1. Position 12 is an omega-N-methylarginine (Arg-12). Ser-13 is subject to Phosphoserine; by AURKB and ROCK1. Arg-30 and Arg-36 each carry citrulline. Residue Ser-38 is modified to Phosphoserine; by AURKB and ROCK1. In terms of domain architecture, IF rod spans 69-377 (ERAEMMELND…KLLEGEENRI (309 aa)). The interval 73–104 (MMELNDRFASYIEKVRFLEQQNKALAAELNQL) is coil 1A. The residue at position 82 (Ser-82) is a Phosphoserine. The tract at residues 105 to 115 (RAKEPTKLADV) is linker 1. Phosphothreonine is present on residues Thr-110 and Thr-150. The interval 116–214 (YQAELRELRL…EEEVRELQEQ (99 aa)) is coil 1B. The interval 215-230 (LARQQVHVELDMAKPD) is linker 12. The tract at residues 231 to 252 (LTAALKEIRTQYEAMASSNMHE) is coil 2A. The tract at residues 253–256 (AEEW) is linker 2. Residues 257 to 377 (YRSKFADLTD…KLLEGEENRI (121 aa)) are coil 2B. Arg-270 is modified (citrulline). Ser-323 carries the phosphoserine modification. The tract at residues 378–432 (TIPVQTFSNLQIRETSLDTKSVSEGHLKRNIVVKTVEMRDGEVIKESKQEHKDVM) is tail. Phosphothreonine is present on Thr-383. At Ser-385 the chain carries Phosphoserine. A citrulline mark is found at Arg-406 and Arg-416.

Belongs to the intermediate filament family. Interacts with SYNM. In terms of processing, phosphorylated by PKN1.

The protein resides in the cytoplasm. Its function is as follows. GFAP, a class-III intermediate filament, is a cell-specific marker that, during the development of the central nervous system, distinguishes astrocytes from other glial cells. This chain is Glial fibrillary acidic protein (GFAP), found in Pongo abelii (Sumatran orangutan).